Here is a 436-residue protein sequence, read N- to C-terminus: MWLFPERVYYLKNENLLISFYIECYLTITTMFLDDDTPHEESTVQPYSINLVRRLMEGNTKDEGIRVLRMAIKFERIDIIKILLEYGVNVNENEYYEEELTCYSVLHFAVDIGNKDIVSILLYAGADVNNTRCYLRNTPLHLAIQQKNTDIAKLLLDSGADQNITNENGNIPIQIAVTYNDEKMVNILLQYSPNLEIADYNGRTVLHNAVLDKNINIVSLLLENGALVDSKCIEGYTILLSSVNRTDPFIIKMLLHRGANPFFLNIKLNHIPLTWYCYCHGNSLSMTVKDLISSAVMISHIRDKVKLTPGFKINEDFTNSIYRFNYYKNLCEEEIRNMKIRRAGYKLTVFDFIKAGKQDDHNTLARCIELLLVGVNKNEFQIYGDIIDQYIKIGLYRKEQLDRVVNSLTSTITNLPYEVIYIIVEKMTNKELCEIR.

6 ANK repeats span residues 63 to 92 (EGIR…NVNE), 101 to 130 (TCYS…DVNN), 135 to 164 (LRNT…DQNI), 168 to 197 (NGNI…NLEI), 201 to 230 (NGRT…LVDS), and 234 to 266 (EGYT…FLNI). Positions 409 to 436 (TSTITNLPYEVIYIIVEKMTNKELCEIR) constitute an F-box domain.

The sequence is that of Putative ankyrin repeat protein FPV026 from Fowlpox virus (strain NVSL) (FPV).